The primary structure comprises 161 residues: MTKNKPSTAEKTRLICQNKKAYHDYDILEKFEAGIVLLGTEVKSLREGRANLKDSYARVRKGEVFLQGLHISPYTHASYNNHEPERVRKLLLHAHEIKRLTGKTQERGLALIPLKLYFSKGKVKVELALAQGKKLYDKRESIKRKEENRELDRLRKRRRQE.

Positions Arg139–Arg153 are enriched in basic and acidic residues. A disordered region spans residues Arg139–Glu161.

Belongs to the SmpB family.

The protein localises to the cytoplasm. Required for rescue of stalled ribosomes mediated by trans-translation. Binds to transfer-messenger RNA (tmRNA), required for stable association of tmRNA with ribosomes. tmRNA and SmpB together mimic tRNA shape, replacing the anticodon stem-loop with SmpB. tmRNA is encoded by the ssrA gene; the 2 termini fold to resemble tRNA(Ala) and it encodes a 'tag peptide', a short internal open reading frame. During trans-translation Ala-aminoacylated tmRNA acts like a tRNA, entering the A-site of stalled ribosomes, displacing the stalled mRNA. The ribosome then switches to translate the ORF on the tmRNA; the nascent peptide is terminated with the 'tag peptide' encoded by the tmRNA and targeted for degradation. The ribosome is freed to recommence translation, which seems to be the essential function of trans-translation. The chain is SsrA-binding protein from Syntrophobacter fumaroxidans (strain DSM 10017 / MPOB).